Reading from the N-terminus, the 504-residue chain is Cytochrome P450 2D10 (504 aa).

Serine 249 is modified (phosphoserine). A heme-binding site is contributed by cysteine 446.

Belongs to the cytochrome P450 family. The cofactor is heme.

The protein localises to the endoplasmic reticulum membrane. The protein resides in the microsome membrane. It carries out the reaction an organic molecule + reduced [NADPH--hemoprotein reductase] + O2 = an alcohol + oxidized [NADPH--hemoprotein reductase] + H2O + H(+). Cytochromes P450 are a group of heme-thiolate monooxygenases. In liver microsomes, this enzyme is involved in an NADPH-dependent electron transport pathway. It oxidizes a variety of structurally unrelated compounds, including steroids, fatty acids, and xenobiotics. This chain is Cytochrome P450 2D10 (Cyp2d10), found in Mus musculus (Mouse).